Reading from the N-terminus, the 255-residue chain is 14-3-3-like protein B (255 aa).

It belongs to the 14-3-3 family.

In Nicotiana tabacum (Common tobacco), this protein is 14-3-3-like protein B.